A 325-amino-acid polypeptide reads, in one-letter code: Diacylglycerol acyltransferase/mycolyltransferase Ag85B (325 aa).

The signal sequence occupies residues 1–40 (MTDVSGKIRAWGRRLLVGAAAAAALPGLVGLAGGAATAGA). 82–83 (LR) serves as a coordination point for substrate. Residues 98–108 (FEWYYQSGLSV) form a fibronectin-binding region. A disulfide bridge links Cys-127 with Cys-132. Substrate is bound by residues Ser-166 and Asp-194. Ser-166 acts as the Nucleophile in catalysis. The active site involves Glu-270. Substrate is bound by residues 272–275 (FVRS), Lys-279, and 302–304 (HSW). The active site involves His-302.

The protein belongs to the mycobacterial A85 antigen family.

The protein resides in the secreted. The catalysed reaction is 2 alpha,alpha'-trehalose 6-mycolate = alpha,alpha'-trehalose 6,6'-bismycolate + alpha,alpha-trehalose. The enzyme catalyses an acyl-CoA + a 1,2-diacyl-sn-glycerol = a triacyl-sn-glycerol + CoA. Functionally, the antigen 85 proteins (FbpA, FbpB, FbpC) are responsible for the high affinity of mycobacteria for fibronectin, a large adhesive glycoprotein, which facilitates the attachment of M.tuberculosis to murine alveolar macrophages (AMs). They also help to maintain the integrity of the cell wall by catalyzing the transfer of mycolic acids to cell wall arabinogalactan and through the synthesis of alpha,alpha-trehalose dimycolate (TDM, cord factor). They catalyze the transfer of a mycoloyl residue from one molecule of alpha,alpha-trehalose monomycolate (TMM) to another TMM, leading to the formation of TDM. This chain is Diacylglycerol acyltransferase/mycolyltransferase Ag85B (fbpB), found in Mycobacterium kansasii.